The chain runs to 278 residues: Biotin synthase (278 aa).

The region spanning 1-227 (MQIMLCAISN…NAHIMVAGGR (227 aa)) is the Radical SAM core domain. 3 residues coordinate [4Fe-4S] cluster: Cys16, Cys20, and Cys23. [2Fe-2S] cluster is bound by residues Cys60, Cys95, and Cys153.

This sequence belongs to the radical SAM superfamily. Biotin synthase family. Homodimer. [4Fe-4S] cluster serves as cofactor. The cofactor is [2Fe-2S] cluster.

The enzyme catalyses (4R,5S)-dethiobiotin + (sulfur carrier)-SH + 2 reduced [2Fe-2S]-[ferredoxin] + 2 S-adenosyl-L-methionine = (sulfur carrier)-H + biotin + 2 5'-deoxyadenosine + 2 L-methionine + 2 oxidized [2Fe-2S]-[ferredoxin]. It functions in the pathway cofactor biosynthesis; biotin biosynthesis; biotin from 7,8-diaminononanoate: step 2/2. Functionally, catalyzes the conversion of dethiobiotin (DTB) to biotin by the insertion of a sulfur atom into dethiobiotin via a radical-based mechanism. The sequence is that of Biotin synthase from Campylobacter lari (strain RM2100 / D67 / ATCC BAA-1060).